The chain runs to 236 residues: 7-cyano-7-deazaguanine synthase (236 aa).

7 to 17 (CSGGLDSVSLA) contacts ATP. Zn(2+)-binding residues include Cys-185, Cys-193, Cys-196, and Cys-199.

This sequence belongs to the QueC family. It depends on Zn(2+) as a cofactor.

The enzyme catalyses 7-carboxy-7-deazaguanine + NH4(+) + ATP = 7-cyano-7-deazaguanine + ADP + phosphate + H2O + H(+). It participates in purine metabolism; 7-cyano-7-deazaguanine biosynthesis. In terms of biological role, catalyzes the ATP-dependent conversion of 7-carboxy-7-deazaguanine (CDG) to 7-cyano-7-deazaguanine (preQ(0)). This chain is 7-cyano-7-deazaguanine synthase, found in Rhizobium rhizogenes (strain K84 / ATCC BAA-868) (Agrobacterium radiobacter).